We begin with the raw amino-acid sequence, 107 residues long: Replication initiation control protein YabA (107 aa).

Zn(2+) contacts are provided by His-81, Cys-83, Cys-97, and Cys-100.

This sequence belongs to the YabA family. In terms of assembly, homotetramer. Interacts with both DnaA and DnaN, acting as a bridge between these two proteins. Requires Zn(2+) as cofactor.

It localises to the cytoplasm. Its subcellular location is the nucleoid. Involved in control of chromosome replication initiation. Inhibits the cooperative binding of DnaA to the oriC region, thus negatively regulating initiation of chromosome replication. Inhibits the ability of DnaA-ATP to form a helix on DNA; does not disassemble preformed DnaA-DNA helices. Decreases the residence time of DnaA on the chromosome at its binding sites (oriC, replication forks and promoter-binding sites). Tethers DnaA to the replication machinery via the DNA polymerase beta sliding clamp subunit (dnaN). Associates with oriC and other DnaA targets on the chromosome in a DnaA-dependent manner. The polypeptide is Replication initiation control protein YabA (Streptococcus pyogenes serotype M1).